The chain runs to 354 residues: Methylthioribose-1-phosphate isomerase (354 aa).

Residues 45 to 47, R87, and Q204 each bind substrate; that span reads RGA. The Proton donor role is filled by D245. Residue 255–256 participates in substrate binding; sequence NK.

The protein belongs to the eIF-2B alpha/beta/delta subunits family. MtnA subfamily.

The enzyme catalyses 5-(methylsulfanyl)-alpha-D-ribose 1-phosphate = 5-(methylsulfanyl)-D-ribulose 1-phosphate. It functions in the pathway amino-acid biosynthesis; L-methionine biosynthesis via salvage pathway; L-methionine from S-methyl-5-thio-alpha-D-ribose 1-phosphate: step 1/6. Its function is as follows. Catalyzes the interconversion of methylthioribose-1-phosphate (MTR-1-P) into methylthioribulose-1-phosphate (MTRu-1-P). This is Methylthioribose-1-phosphate isomerase from Chlorobaculum tepidum (strain ATCC 49652 / DSM 12025 / NBRC 103806 / TLS) (Chlorobium tepidum).